The following is a 197-amino-acid chain: Gastrula zinc finger protein XlCGF17.1 (197 aa).

C2H2-type zinc fingers lie at residues 6–28, 34–56, 62–84, 90–112, 118–140, 146–169, and 175–197; these read ISCSECGKCFIKSSELTVHQMTH, YSCSECGKCFASLSHLRVHQKIH, FSCSECGKCFLNRGSLVRHHRTH, FFCSECGKRFAASSDLRVHRRTH, FSCSECEKRFLNPWSLVRHYRTH, FSCSECGKCFARSSDLTVHRRRSH, and FSCSECGKCFTSSSELTVHLRTH.

It belongs to the krueppel C2H2-type zinc-finger protein family.

Its subcellular location is the nucleus. In terms of biological role, may be involved in transcriptional regulation. This chain is Gastrula zinc finger protein XlCGF17.1, found in Xenopus laevis (African clawed frog).